The primary structure comprises 254 residues: Alcohol dehydrogenase (254 aa).

10–33 (FVAGLGGIGLDTSREIVKSGPKNL) is a binding site for NAD(+). Serine 138 is a substrate binding site. Residue tyrosine 151 is the Proton acceptor of the active site.

This sequence belongs to the short-chain dehydrogenases/reductases (SDR) family. In terms of assembly, homodimer.

The enzyme catalyses a primary alcohol + NAD(+) = an aldehyde + NADH + H(+). The catalysed reaction is a secondary alcohol + NAD(+) = a ketone + NADH + H(+). This chain is Alcohol dehydrogenase (Adh), found in Drosophila nigra (Fruit fly).